The following is a 436-amino-acid chain: 3-ketoacyl-CoA thiolase (436 aa).

Residue Cys99 is the Acyl-thioester intermediate of the active site. Active-site proton acceptor residues include His392 and Cys422.

It belongs to the thiolase-like superfamily. Thiolase family. Heterotetramer of two alpha chains (FadJ) and two beta chains (FadI).

The protein resides in the cytoplasm. It catalyses the reaction an acyl-CoA + acetyl-CoA = a 3-oxoacyl-CoA + CoA. It functions in the pathway lipid metabolism; fatty acid beta-oxidation. In terms of biological role, catalyzes the final step of fatty acid oxidation in which acetyl-CoA is released and the CoA ester of a fatty acid two carbons shorter is formed. This Cronobacter sakazakii (strain ATCC BAA-894) (Enterobacter sakazakii) protein is 3-ketoacyl-CoA thiolase.